We begin with the raw amino-acid sequence, 529 residues long: Phosphoenolpyruvate carboxykinase (ATP) (529 aa).

3 residues coordinate substrate: arginine 60, tyrosine 195, and lysine 201. ATP contacts are provided by residues lysine 201, histidine 220, and 236–244; that span reads GLSGTGKTT. Mn(2+)-binding residues include lysine 201 and histidine 220. Aspartate 257 is a Mn(2+) binding site. ATP-binding residues include glutamate 285, arginine 323, and serine 448. Residue arginine 323 participates in substrate binding.

Belongs to the phosphoenolpyruvate carboxykinase (ATP) family. The cofactor is Mn(2+).

The protein resides in the cytoplasm. It carries out the reaction oxaloacetate + ATP = phosphoenolpyruvate + ADP + CO2. Its pathway is carbohydrate biosynthesis; gluconeogenesis. In terms of biological role, involved in the gluconeogenesis. Catalyzes the conversion of oxaloacetate (OAA) to phosphoenolpyruvate (PEP) through direct phosphoryl transfer between the nucleoside triphosphate and OAA. The polypeptide is Phosphoenolpyruvate carboxykinase (ATP) (Geobacter sp. (strain M21)).